Reading from the N-terminus, the 1005-residue chain is Translation initiation factor IF-2 (1005 aa).

Disordered regions lie at residues 54–337 (KYVP…RRPQ) and 368–414 (PKPK…PTSV). Polar residues predominate over residues 58–73 (SPSTHSMPPTRPTSHS). Residues 75-86 (PLPPQPGKPQPK) are compositionally biased toward pro residues. The span at 146–157 (GSNSPSHSESTP) shows a compositional bias: polar residues. Composition is skewed to low complexity over residues 189–198 (PSPAAMAGRA) and 222–240 (VESA…PRAE). Residues 258-274 (PRSETSEDGARRGEKLV) are compositionally biased toward basic and acidic residues. Over residues 392-401 (GGRKLSRRDR) the composition is skewed to basic residues. The tr-type G domain occupies 495-668 (RRPPVVTIMG…LLVSEVEDLY (174 aa)). A G1 region spans residues 504–511 (GHVDHGKT). GTP is bound at residue 504–511 (GHVDHGKT). The tract at residues 529-533 (GITQH) is G2. The tract at residues 554 to 557 (DTPG) is G3. Residues 554–558 (DTPGH) and 608–611 (NKID) each bind GTP. A G4 region spans residues 608-611 (NKID). Residues 644–646 (SAI) are G5.

Belongs to the TRAFAC class translation factor GTPase superfamily. Classic translation factor GTPase family. IF-2 subfamily.

The protein localises to the cytoplasm. Functionally, one of the essential components for the initiation of protein synthesis. Protects formylmethionyl-tRNA from spontaneous hydrolysis and promotes its binding to the 30S ribosomal subunits. Also involved in the hydrolysis of GTP during the formation of the 70S ribosomal complex. This is Translation initiation factor IF-2 from Cyanothece sp. (strain PCC 7425 / ATCC 29141).